The chain runs to 467 residues: 6-phospho-beta-galactosidase (467 aa).

The D-galactose 6-phosphate site is built by glutamine 19, histidine 116, asparagine 159, glutamate 160, and asparagine 297. Glutamate 160 acts as the Proton donor in catalysis. Glutamate 375 functions as the Nucleophile in the catalytic mechanism. Positions 428, 429, 435, and 437 each coordinate D-galactose 6-phosphate.

It belongs to the glycosyl hydrolase 1 family.

The catalysed reaction is a 6-phospho-beta-D-galactoside + H2O = D-galactose 6-phosphate + an alcohol. It functions in the pathway carbohydrate metabolism; lactose degradation; D-galactose 6-phosphate and beta-D-glucose from lactose 6-phosphate: step 1/1. With respect to regulation, inhibited by both galactose-6-phosphate and ATP. In Leptotrichia buccalis (strain ATCC 14201 / DSM 1135 / JCM 12969 / NCTC 10249 / C-1013-b), this protein is 6-phospho-beta-galactosidase.